A 177-amino-acid polypeptide reads, in one-letter code: CDP-diacylglycerol--serine O-phosphatidyltransferase (177 aa).

Helical transmembrane passes span 4–24 (IPCMITIGNFICGLLAIHSLL), 28–48 (IHSAVLFIFTGMFLDFFDGMA), 77–97 (MLAYSVALYTLPFIGILCALT), 116–136 (LPTFIGMPIPFAGMCLVILSF), and 140–160 (PILLAIGTCGLSYLMVSKIKF).

It belongs to the CDP-alcohol phosphatidyltransferase class-I family.

The protein localises to the cell membrane. It catalyses the reaction a CDP-1,2-diacyl-sn-glycerol + L-serine = a 1,2-diacyl-sn-glycero-3-phospho-L-serine + CMP + H(+). The polypeptide is CDP-diacylglycerol--serine O-phosphatidyltransferase (pssA) (Bacillus subtilis (strain 168)).